Here is a 38-residue protein sequence, read N- to C-terminus: Mu/omega-theraphotoxin-Mb1a (38 aa).

Disulfide bonds link cysteine 7–cysteine 21, cysteine 14–cysteine 26, and cysteine 20–cysteine 33. Position 38 is a threonine amide (threonine 38).

It belongs to the neurotoxin 10 (Hwtx-1) family. 28 (Jztx-11) subfamily. Expressed by the venom gland.

It is found in the secreted. In terms of biological role, paralytic toxin that inhibits insect voltage-gated sodium (Nav) and calcium (Cav) channels in P.americana (American cockroach) dorsal unpaired median (DUM) neurons, and inhibits the B.germanica (German cockroach) Nav channel (BgNaV1). Also shows a delay in fast inactivation when tested on BgNaV1. May act as a gating-modifier toxin on Nav and as a pore blocker on Cav. In vivo, reversibly paralyzes both L.cuprina (Australian sheep blowfly) and M.domestica (housefly), but does not affect larvae of H.armigera (cotton bollworms). This Monocentropus balfouri (Socotra Island blue baboon tarantula) protein is Mu/omega-theraphotoxin-Mb1a.